Consider the following 160-residue polypeptide: Putative 4-hydroxy-4-methyl-2-oxoglutarate aldolase (160 aa).

Substrate is bound by residues 75–78 (GDQL) and Arg-97. Asp-98 lines the a divalent metal cation pocket.

It belongs to the class II aldolase/RraA-like family. As to quaternary structure, homotrimer. A divalent metal cation serves as cofactor.

It catalyses the reaction 4-hydroxy-4-methyl-2-oxoglutarate = 2 pyruvate. The catalysed reaction is oxaloacetate + H(+) = pyruvate + CO2. Functionally, catalyzes the aldol cleavage of 4-hydroxy-4-methyl-2-oxoglutarate (HMG) into 2 molecules of pyruvate. Also contains a secondary oxaloacetate (OAA) decarboxylase activity due to the common pyruvate enolate transition state formed following C-C bond cleavage in the retro-aldol and decarboxylation reactions. The polypeptide is Putative 4-hydroxy-4-methyl-2-oxoglutarate aldolase (Vibrio parahaemolyticus serotype O3:K6 (strain RIMD 2210633)).